The primary structure comprises 597 residues: Aspartate--tRNA(Asp/Asn) ligase (597 aa).

Residue Glu176 participates in L-aspartate binding. The segment at Gln200–Lys203 is aspartate. L-aspartate contacts are provided by Arg222 and His451. Arg222 to Glu224 contacts ATP. Glu489 provides a ligand contact to ATP. Arg496 contributes to the L-aspartate binding site. Gly541–Arg544 contributes to the ATP binding site.

Belongs to the class-II aminoacyl-tRNA synthetase family. Type 1 subfamily. In terms of assembly, homodimer.

The protein localises to the cytoplasm. The enzyme catalyses tRNA(Asx) + L-aspartate + ATP = L-aspartyl-tRNA(Asx) + AMP + diphosphate. Its function is as follows. Aspartyl-tRNA synthetase with relaxed tRNA specificity since it is able to aspartylate not only its cognate tRNA(Asp) but also tRNA(Asn). Reaction proceeds in two steps: L-aspartate is first activated by ATP to form Asp-AMP and then transferred to the acceptor end of tRNA(Asp/Asn). The sequence is that of Aspartate--tRNA(Asp/Asn) ligase from Orientia tsutsugamushi (strain Boryong) (Rickettsia tsutsugamushi).